A 1238-amino-acid chain; its full sequence is Anion exchange protein 2 (1238 aa).

The tract at residues 1–238 (MSGTPRRPAS…YNLQERRRIG (238 aa)) is disordered. Over 1-704 (MSGTPRRPAS…SDFRDALDPQ (704 aa)) the chain is Cytoplasmic. Basic and acidic residues-rich tracts occupy residues 37–49 (DLHR…RFEE) and 58–75 (GGEE…EYHR). 2 stretches are compositionally biased toward basic residues: residues 76–85 (QSSHHIHHPL) and 94–110 (RRRK…RRRP). Residues 120-133 (TIEEGEEDEDETSE) are compositionally biased toward acidic residues. Phosphoserine occurs at positions 132, 144, 170, and 172. Over residues 141-154 (TDPSPASTPTSVQF) the composition is skewed to polar residues. Residues 205 to 215 (GTAGGDDGGAS) show a composition bias toward gly residues. Residue Ser239 is modified to Phosphoserine. Thr253 carries the phosphothreonine modification. An N6-methyllysine modification is found at Lys270. A disordered region spans residues 277–315 (VPGVRRHLVRKNAKGSSQSSREGREPGPTPRTRPRAPHK). Positions 280–289 (VRRHLVRKNA) are enriched in basic residues. A Phosphoserine modification is found at Ser439. Residues 445 to 466 (SLLGHHHTQGAESDPHVTEPLI) form a disordered region. The next 4 helical transmembrane spans lie at 705 to 728 (CLAA…GLLG), 734 to 771 (LIGV…LLVF), 791 to 813 (VWIG…SFLV), and 823 to 844 (IFAF…VKIF). The tract at residues 705 to 1238 (CLAAVIFIYF…DEYNEMPMPV (534 aa)) is membrane (anion exchange). The Extracellular segment spans residues 845-897 (QEHPLHGCLASNSSEADGGKNTTWTEAAPTPGHGNTSSAEQAGVERPQGQPNT). N-linked (GlcNAc...) asparagine glycosylation is found at Asn856, Asn865, and Asn879. Positions 858–869 (SEADGGKNTTWT) are enriched in polar residues. Residues 858-892 (SEADGGKNTTWTEAAPTPGHGNTSSAEQAGVERPQ) are disordered. The chain crosses the membrane as a helical span at residues 898-915 (ALLSLVLMAGTFFIAFFL). The Cytoplasmic segment spans residues 916–930 (RKFKNSRFFPGRIRR). Helical transmembrane passes span 931–951 (VIGD…DYSI), 985–1007 (PFPV…LIFM), 1033–1054 (LLLI…LAAA), 1088–1133 (VTGL…IQFY), and 1160–1196 (MHLF…TVPL). A lipid anchor (S-palmitoyl cysteine) is attached at Cys1170.

This sequence belongs to the anion exchanger (TC 2.A.31) family. As to expression, expressed in the cochlea (at protein level).

It localises to the apical cell membrane. It is found in the basolateral cell membrane. The catalysed reaction is hydrogencarbonate(in) + chloride(out) = hydrogencarbonate(out) + chloride(in). Functionally, sodium-independent anion exchanger which mediates the electroneutral exchange of chloride for bicarbonate ions across the cell membrane. Plays an important role in osteoclast differentiation and function. Regulates bone resorption and calpain-dependent actin cytoskeleton organization in osteoclasts via anion exchange-dependent control of pH. Essential for intracellular pH regulation in CD8(+) T-cells upon CD3 stimulation, modulating CD8(+) T-cell response. The polypeptide is Anion exchange protein 2 (SLC4A2) (Cavia porcellus (Guinea pig)).